The primary structure comprises 200 residues: ATP-dependent Clp protease proteolytic subunit 2 (200 aa).

Ser-99 serves as the catalytic Nucleophile. His-124 is an active-site residue.

This sequence belongs to the peptidase S14 family. As to quaternary structure, fourteen ClpP subunits assemble into 2 heptameric rings which stack back to back to give a disk-like structure with a central cavity, resembling the structure of eukaryotic proteasomes.

It is found in the cytoplasm. It carries out the reaction Hydrolysis of proteins to small peptides in the presence of ATP and magnesium. alpha-casein is the usual test substrate. In the absence of ATP, only oligopeptides shorter than five residues are hydrolyzed (such as succinyl-Leu-Tyr-|-NHMec, and Leu-Tyr-Leu-|-Tyr-Trp, in which cleavage of the -Tyr-|-Leu- and -Tyr-|-Trp bonds also occurs).. Its function is as follows. Cleaves peptides in various proteins in a process that requires ATP hydrolysis. Has a chymotrypsin-like activity. Plays a major role in the degradation of misfolded proteins. This chain is ATP-dependent Clp protease proteolytic subunit 2, found in Treponema denticola (strain ATCC 35405 / DSM 14222 / CIP 103919 / JCM 8153 / KCTC 15104).